The primary structure comprises 335 residues: Proline racemase (335 aa).

Residue Cys91 is the Proton acceptor of the active site. Cys255 acts as the Proton donor in catalysis.

This sequence belongs to the proline racemase family. Homodimer.

It catalyses the reaction L-proline = D-proline. In terms of biological role, catalyzes the reversible interconversion of L- and D-proline. Plays an important role in the regulation of intra- and extracellular amino acid pools, allowing the bacterium to profit from host precursors and enzymatic pathways. Strong B-cell mitogen. This chain is Proline racemase, found in Clostridioides difficile (strain 630) (Peptoclostridium difficile).